An 88-amino-acid polypeptide reads, in one-letter code: Small ribosomal subunit protein uS17 (88 aa).

Belongs to the universal ribosomal protein uS17 family. As to quaternary structure, part of the 30S ribosomal subunit.

Functionally, one of the primary rRNA binding proteins, it binds specifically to the 5'-end of 16S ribosomal RNA. The sequence is that of Small ribosomal subunit protein uS17 from Prochlorococcus marinus (strain SARG / CCMP1375 / SS120).